A 289-amino-acid polypeptide reads, in one-letter code: Thymidylate synthase (289 aa).

DUMP-binding positions include Arg21 and 150 to 151 (RR). Cys170 (nucleophile) is an active-site residue. DUMP contacts are provided by residues 191–194 (RSGD), Asn202, and 232–234 (HIY). Residue Asp194 participates in (6R)-5,10-methylene-5,6,7,8-tetrahydrofolate binding. Ala288 is a (6R)-5,10-methylene-5,6,7,8-tetrahydrofolate binding site.

It belongs to the thymidylate synthase family. Bacterial-type ThyA subfamily. In terms of assembly, homodimer.

It is found in the cytoplasm. It carries out the reaction dUMP + (6R)-5,10-methylene-5,6,7,8-tetrahydrofolate = 7,8-dihydrofolate + dTMP. It participates in pyrimidine metabolism; dTTP biosynthesis. Functionally, catalyzes the reductive methylation of 2'-deoxyuridine-5'-monophosphate (dUMP) to 2'-deoxythymidine-5'-monophosphate (dTMP) while utilizing 5,10-methylenetetrahydrofolate (mTHF) as the methyl donor and reductant in the reaction, yielding dihydrofolate (DHF) as a by-product. This enzymatic reaction provides an intracellular de novo source of dTMP, an essential precursor for DNA biosynthesis. This chain is Thymidylate synthase, found in Mycoplasmopsis synoviae (strain 53) (Mycoplasma synoviae).